An 85-amino-acid chain; its full sequence is Small ribosomal subunit protein bS20 (85 aa).

This sequence belongs to the bacterial ribosomal protein bS20 family.

Functionally, binds directly to 16S ribosomal RNA. The polypeptide is Small ribosomal subunit protein bS20 (Borrelia hermsii (strain HS1 / DAH)).